Consider the following 470-residue polypeptide: Crh-like protein UTR2 (470 aa).

The first 23 residues, 1–23, serve as a signal peptide directing secretion; the sequence is MRFSTLHFAFLATLSSIFTVVAA. A disulfide bond links Cys-58 and Cys-69. N-linked (GlcNAc...) asparagine glycans are attached at residues Asn-65, Asn-100, and Asn-125. A GH16 domain is found at 95–282; sequence SDYLGNSTEA…WAGGLINWDS (188 aa). Glu-168 (nucleophile) is an active-site residue. Residue Glu-172 is the Proton donor of the active site. Residue Glu-172 coordinates chitin. Residues Asn-177, Asn-194, Asn-198, Asn-202, Asn-235, and Asn-239 are each glycosylated (N-linked (GlcNAc...) asparagine). Residues Trp-259 and Thr-270 each contribute to the chitin site. Asn-314 and Asn-327 each carry an N-linked (GlcNAc...) asparagine glycan. Positions 347–446 are disordered; that stretch reads SDDATGFDPQ…SSGSSSQGVA (100 aa). Composition is skewed to low complexity over residues 370 to 384 and 392 to 408; these read TTIT…ITSV and TANV…QATA. Residues 409–418 are compositionally biased toward polar residues; that stretch reads KSSTGTNTYD. A compositionally biased stretch (low complexity) spans 433-446; it reads TDSGSSGSSSQGVA. Ser-440 carries the GPI-anchor amidated serine lipid modification. The propeptide at 441 to 470 is removed in mature form; it reads SSQGVANSLNESVISGIFASICLGILSFFM. Asn-450 carries N-linked (GlcNAc...) asparagine glycosylation.

The protein belongs to the glycosyl hydrolase 16 family. CRH1 subfamily. The GPI-anchor is attached to the protein in the endoplasmic reticulum and serves to target the protein to the cell surface. There, the glucosamine-inositol phospholipid moiety is cleaved off and the GPI-modified mannoprotein is covalently attached via its lipidless GPI glycan remnant to the 1,6-beta-glucan of the outer cell wall layer.

Its subcellular location is the secreted. It is found in the cell wall. The protein localises to the membrane. It catalyses the reaction Random endo-hydrolysis of N-acetyl-beta-D-glucosaminide (1-&gt;4)-beta-linkages in chitin and chitodextrins.. In terms of biological role, dual chitinase/transglycosylase that plays a role in cell wall architecture. Chitinase and transglycosylase activities are coupled. Required for the polysaccharide cross-linking at the septa and the cell wall. More specifically, transfers chitin to 1,6-beta-glucan in the cell wall. Plays an important role in fungal pathogenesis via its functions in cell wall assembly and regeneration, filamentation, and adherence to host cells. Acts as a cell surface antigen in acute candidemia patients. This Candida albicans (strain SC5314 / ATCC MYA-2876) (Yeast) protein is Crh-like protein UTR2.